Here is a 297-residue protein sequence, read N- to C-terminus: Formiminotransferase cyclodeaminase-like protein (297 aa).

The tract at residues 2–196 (LREMLGCCKV…GVVAVGACGW (195 aa)) is formiminotransferase N-subdomain. His-89 serves as the catalytic For formimidoyltransferase activity. 178 to 187 (GPQEVSKAKG) is a folate binding site.

Belongs to the formiminotransferase family. As to expression, expressed constitutively in roots, stems, leaves and flowers.

It is found in the golgi apparatus. Its subcellular location is the trans-Golgi network. It carries out the reaction (6S)-5-formyl-5,6,7,8-tetrahydrofolate + L-glutamate = N-formyl-L-glutamate + (6S)-5,6,7,8-tetrahydrofolate + H(+). The catalysed reaction is 5-formimidoyltetrahydrofolate + L-glutamate = N-formimidoyl-L-glutamate + (6S)-5,6,7,8-tetrahydrofolate. The protein operates within one-carbon metabolism; tetrahydrofolate interconversion. Functionally, involved in the regulation of root growth. May regulate sorting and/or transportation of trans-Golgi network (TGN) vesicles in root cap peripheral cells, thus influencing the extracellular secretion of mucilage components in the root cap. In Arabidopsis thaliana (Mouse-ear cress), this protein is Formiminotransferase cyclodeaminase-like protein.